The chain runs to 162 residues: Mitochondrial intermembrane space import and assembly protein 40 homolog (162 aa).

The disordered stretch occupies residues 1–61 (MGQAQSDENS…DNENESLEAK (61 aa)). Positions 9–18 (NSIPTTTTTN) are enriched in low complexity. 3 disulfides stabilise this stretch: cysteine 68–cysteine 70, cysteine 79–cysteine 112, and cysteine 89–cysteine 102. The 45-residue stretch at 76–120 (NGSCGSQFSEAFLCFLKSTAEEKGSDCVNPFVALQSCINANPDAF) folds into the CHCH domain. 2 consecutive short sequence motifs (cx9C motif) follow at residues 79–89 (CGSQFSEAFLC) and 102–112 (CVNPFVALQSC). A disordered region spans residues 119–162 (AFSKSVTGDEKETEKKEEQPPVQDHRIIPPLWAKDPPRSGNSKL). A compositionally biased stretch (basic and acidic residues) spans 125–145 (TGDEKETEKKEEQPPVQDHRI).

Its subcellular location is the mitochondrion intermembrane space. The protein resides in the peroxisome matrix. Its function is as follows. Required for the import and folding of small cysteine-containing proteins in the mitochondrial intermembrane space. Involved in the mitochondrial oxidative folding of the copper-zinc superoxide dismutase CSD1, the copper chaperone for superoxide dismutase CCS, and subunits of the mitochondrial membrane respiratory chain NADH dehydrogenase (Complex I). Involved in the peroxisomal oxidative folding of the copper-zinc superoxide dismutase CSD3, and the fatty acid beta-oxidation multifunctional protein AIM1. This chain is Mitochondrial intermembrane space import and assembly protein 40 homolog, found in Arabidopsis thaliana (Mouse-ear cress).